The chain runs to 39 residues: Cytochrome b6-f complex subunit 5 (39 aa).

A helical transmembrane segment spans residues 5 to 25 (LLCGIVLGLVPITLLGLFVSA).

Belongs to the PetG family. The 4 large subunits of the cytochrome b6-f complex are cytochrome b6, subunit IV (17 kDa polypeptide, PetD), cytochrome f and the Rieske protein, while the 4 small subunits are PetG, PetL, PetM and PetN. The complex functions as a dimer.

Its subcellular location is the cellular thylakoid membrane. Functionally, component of the cytochrome b6-f complex, which mediates electron transfer between photosystem II (PSII) and photosystem I (PSI), cyclic electron flow around PSI, and state transitions. PetG is required for either the stability or assembly of the cytochrome b6-f complex. This Prochlorococcus marinus (strain MIT 9515) protein is Cytochrome b6-f complex subunit 5.